The chain runs to 1210 residues: Histone-lysine N-methyltransferase EHMT2 (1210 aa).

The segment covering Met-1–Ala-23 has biased composition (low complexity). Disordered stretches follow at residues Met-1 to Trp-262 and Asp-280 to Glu-386. The residue at position 2 (Ala-2) is an N-acetylalanine. The segment covering Leu-26 to His-38 has biased composition (basic and acidic residues). The residue at position 40 (Ser-40) is a Phosphoserine. Residue Thr-44 is modified to Phosphothreonine. Ser-47 is subject to Phosphoserine. A compositionally biased stretch (low complexity) spans Gly-105–Ser-128. Ser-140 is modified (phosphoserine). Residues Pro-155–Ser-165 show a composition bias toward low complexity. A Phosphoserine modification is found at Ser-173. Lys-185 is subject to N6,N6,N6-trimethyllysine; by EHMT2; alternate. Lys-185 carries the post-translational modification N6,N6-dimethyllysine; by EHMT2; alternate. Residues Pro-198 to Ser-216 show a composition bias toward basic and acidic residues. Glycyl lysine isopeptide (Lys-Gly) (interchain with G-Cter in SUMO2) cross-links involve residues Lys-219 and Lys-229. A phosphoserine mark is found at Ser-232, Ser-242, and Ser-246. The span at Asp-280 to Val-291 shows a compositional bias: basic and acidic residues. Positions Leu-298–Ser-327 are enriched in acidic residues. A compositionally biased stretch (basic residues) spans Gly-338–Arg-347. Residues Ser-350, Ser-412, and Ser-413 each carry the phosphoserine modification. The tract at residues Ile-548–Pro-608 is disordered. At Thr-555 the chain carries Phosphothreonine. Position 569 is a phosphoserine (Ser-569). A Glycyl lysine isopeptide (Lys-Gly) (interchain with G-Cter in SUMO2) cross-link involves residue Lys-634. ANK repeat units follow at residues Phe-649 to Phe-678, Ser-684 to Ala-713, Gln-717 to Ser-746, Asp-750 to Ala-780, Gly-784 to Leu-813, Glu-817 to Ala-846, and His-850 to Leu-879. The tract at residues Glu-817 to Asn-819 is histone H3K9me binding. The Pre-SET domain occupies Gln-972 to Gly-1035. Zn(2+) is bound by residues Cys-974, Cys-976, Cys-980, Cys-985, Cys-987, Cys-1017, Cys-1021, Cys-1023, and Cys-1027. The 118-residue stretch at Val-1038–Gly-1155 folds into the SET domain. Residues Met-1048 to Trp-1050, Tyr-1085, and Asn-1112 to His-1113 each bind S-adenosyl-L-methionine. Positions Asp-1074–Asp-1093 are interaction with histone H3. Residue Cys-1115 participates in Zn(2+) binding. Positions Tyr-1154–Arg-1157 are interaction with histone H3. The Post-SET domain occupies Lys-1164 to Glu-1180. Cys-1168 is a Zn(2+) binding site. Gln-1169 contributes to the S-adenosyl-L-methionine binding site. Zn(2+) contacts are provided by Cys-1170 and Cys-1175. Ser-1204 carries the phosphoserine modification. A Phosphothreonine modification is found at Thr-1210.

This sequence belongs to the class V-like SAM-binding methyltransferase superfamily. Histone-lysine methyltransferase family. Suvar3-9 subfamily. In terms of assembly, heterodimer; heterodimerizes with EHMT1/GLP. Interacts with GFI1B and WIZ. Part of the E2F6.com-1 complex in G0 phase composed of E2F6, MGA, MAX, TFDP1, CBX3, BAT8, EHMT1, RING1, RNF2, MBLR, L3MBTL2 and YAF2. Part of a complex composed of TRIM28, HDAC1, HDAC2 and EHMT2. Interacts with UHRF1. Interacts with CDYL. Interacts with REST only in the presence of CDYL. Part of a complex containing at least CDYL, REST, WIZ, SETB1, EHMT1 and EHMT2. Interacts with PRDM9 and CDYL; interaction only takes place when PRDM9 is bound to hotspot DNA. Interacts with SMYD5. Methylated at Lys-185; automethylated. In terms of tissue distribution, expressed in all tissues examined, with high levels in fetal liver, thymus, lymph node, spleen and peripheral blood leukocytes and lower level in bone marrow.

Its subcellular location is the nucleus. The protein resides in the chromosome. It carries out the reaction N(6)-methyl-L-lysyl(9)-[histone H3] + S-adenosyl-L-methionine = N(6),N(6)-dimethyl-L-lysyl(9)-[histone H3] + S-adenosyl-L-homocysteine + H(+). The enzyme catalyses L-lysyl(9)-[histone H3] + S-adenosyl-L-methionine = N(6)-methyl-L-lysyl(9)-[histone H3] + S-adenosyl-L-homocysteine + H(+). Its function is as follows. Histone methyltransferase that specifically mono- and dimethylates 'Lys-9' of histone H3 (H3K9me1 and H3K9me2, respectively) in euchromatin. H3K9me represents a specific tag for epigenetic transcriptional repression by recruiting HP1 proteins to methylated histones. Also mediates monomethylation of 'Lys-56' of histone H3 (H3K56me1) in G1 phase, leading to promote interaction between histone H3 and PCNA and regulating DNA replication. Also weakly methylates 'Lys-27' of histone H3 (H3K27me). Also required for DNA methylation, the histone methyltransferase activity is not required for DNA methylation, suggesting that these 2 activities function independently. Probably targeted to histone H3 by different DNA-binding proteins like E2F6, MGA, MAX and/or DP1. May also methylate histone H1. In addition to the histone methyltransferase activity, also methylates non-histone proteins: mediates dimethylation of 'Lys-373' of p53/TP53. Also methylates CDYL, WIZ, ACIN1, DNMT1, HDAC1, ERCC6, KLF12 and itself. The sequence is that of Histone-lysine N-methyltransferase EHMT2 (EHMT2) from Homo sapiens (Human).